The following is a 375-amino-acid chain: Phosphoglucan phosphatase DSP4, amyloplastic (375 aa).

The transit peptide at 1–42 (MFCVQNLPRSSALPLQSFKSHQRRPPCSVNTLGVMSNVNLHR) directs the protein to the amyloplast. Residues 49-71 (ISGPTSSAETSDANVEEEKSETY) are disordered. The span at 51–61 (GPTSSAETSDA) shows a compositional bias: polar residues. In terms of domain architecture, Tyrosine-protein phosphatase spans 92–249 (NYNFIRPDLI…AADILTGLRK (158 aa)). The active-site Phosphocysteine intermediate is cysteine 193. 194 to 199 (TAGLGR) is a substrate binding site. Positions 254 to 330 (LTWKNPDCTT…NKDGHVNNFV (77 aa)) are polysaccharide binding.

In terms of tissue distribution, expressed in phloem parenchyma of 16-24 week old seedlings and 2 year old trees (at protein level). Expressed in leaves of 16-24 week old seedlings and 2 year old trees.

It is found in the plastid. Its subcellular location is the amyloplast. The protein resides in the nucleus. Functionally, starch granule-associated phosphoglucan phosphatase involved in the control of starch accumulation. Acts as a major regulator of the initial steps of starch degradation at the granule surface. Functions during the day by dephosphorylating the night-accumulated phospho-oligosaccharides. Can release phosphate from both the C6 and the C3 positions. This is Phosphoglucan phosphatase DSP4, amyloplastic from Castanea sativa (Sweet chestnut).